The chain runs to 931 residues: G patch domain-containing protein 1 (931 aa).

Disordered stretches follow at residues 1 to 41 (MAAR…TVRD), 73 to 92 (PSTF…LGPE), and 169 to 209 (QGVG…EDDD). An N-acetylalanine modification is found at A2. 2 positions are modified to phosphoserine: S6 and S8. The G-patch domain maps to 152–198 (KLSVGFELLRKMGWKEGQGVGPRVKRRPRRQKPDPGVKIYGCALPPG). K312 participates in a covalent cross-link: Glycyl lysine isopeptide (Lys-Gly) (interchain with G-Cter in SUMO2). Phosphoserine is present on residues S357 and S477. 2 disordered regions span residues 568–595 (RFTH…GDKQ) and 659–931 (LPTT…LRRQ). Over residues 582–593 (EVPRDQENDVGD) the composition is skewed to basic and acidic residues. A compositionally biased stretch (polar residues) spans 659 to 668 (LPTTQASSEK). Residues 669–695 (VSQHRGPDKSRKPSRWDTSKHEKKEDS) are compositionally biased toward basic and acidic residues. A Phosphoserine modification is found at S715. The span at 769–780 (SEDEQGDSEDDQ) shows a compositional bias: acidic residues. Residues 786 to 802 (ANFQSSQDTDLGETSSV) show a composition bias toward polar residues. Basic residues predominate over residues 852 to 888 (EKHKKNKDKHKAKKEHRRKKEKKKKHRKHKHKGKQKN). Low complexity predominate over residues 896-905 (SSESSDSSDS). Positions 922-931 (RLKSLPLRRQ) are enriched in basic residues.

It belongs to the GPATCH1 family.

The chain is G patch domain-containing protein 1 (GPATCH1) from Homo sapiens (Human).